The sequence spans 294 residues: Protease HtpX (294 aa).

2 consecutive transmembrane segments (helical) span residues 4–24 (IALF…VLSL) and 34–52 (GLLI…VSLM). His139 serves as a coordination point for Zn(2+). The active site involves Glu140. Zn(2+) is bound at residue His143. Helical transmembrane passes span 158 to 178 (VVNT…AGFL) and 194 to 214 (LIYF…ASII). Glu223 contributes to the Zn(2+) binding site.

It belongs to the peptidase M48B family. The cofactor is Zn(2+).

The protein localises to the cell inner membrane. The polypeptide is Protease HtpX (Klebsiella pneumoniae subsp. pneumoniae (strain ATCC 700721 / MGH 78578)).